A 260-amino-acid chain; its full sequence is uncharacterized protein (260 aa).

This is an uncharacterized protein from Aquifex aeolicus (strain VF5).